A 436-amino-acid chain; its full sequence is RNA-binding motif, single-stranded-interacting protein 3 (436 aa).

Residues 28 to 56 are disordered; sequence APAPHPMAPPSPSTNSSSNNSSNNSSGEQ. The span at 30–39 shows a compositional bias: pro residues; that stretch reads APHPMAPPSP. The span at 40–53 shows a compositional bias: low complexity; the sequence is STNSSSNNSSNNSS. 2 RRM domains span residues 60 to 133 and 139 to 224; these read TNLY…MAKQ and TNLY…FADG. Residues 398-421 are compositionally biased toward polar residues; that stretch reads TSPQTVAPSSQDTSGQQQQIAVDT. The disordered stretch occupies residues 398–436; the sequence is TSPQTVAPSSQDTSGQQQQIAVDTSNEHAPAYSYQQSKP.

The protein localises to the cytoplasm. Its function is as follows. Binds poly(A) and poly(U) oligoribonucleotides. This is RNA-binding motif, single-stranded-interacting protein 3 (RBMS3) from Pongo abelii (Sumatran orangutan).